The chain runs to 341 residues: Retinol dehydrogenase 10 (341 aa).

The helical; Signal-anchor transmembrane segment at 3–23 (IVVEFFVVTFKVLWAFVLAAA) threads the bilayer. Residue 40 to 64 (LITGAGSGLGRLFALEFARRRALLV) participates in NADP(+) binding. Residue S197 coordinates substrate. The active-site Proton acceptor is Y210.

This sequence belongs to the short-chain dehydrogenases/reductases (SDR) family. As to expression, detected in retinal pigment epithelium (at protein level). Detected in retina, retinal pigment epithelium, and at lower levels in cornea, liver, kidney, pancreas, lung, brain and skeletal muscle.

The protein resides in the microsome membrane. It is found in the endoplasmic reticulum membrane. The enzyme catalyses all-trans-retinol + NADP(+) = all-trans-retinal + NADPH + H(+). It participates in cofactor metabolism; retinol metabolism. In terms of biological role, retinol dehydrogenase with a clear preference for NADP. Converts all-trans-retinol to all-trans-retinal. Has no detectable activity towards 11-cis-retinol, 9-cis-retinol and 13-cis-retinol. The protein is Retinol dehydrogenase 10 (RDH10) of Bos taurus (Bovine).